Consider the following 125-residue polypeptide: Small ribosomal subunit protein uS13 (125 aa).

This sequence belongs to the universal ribosomal protein uS13 family. In terms of assembly, part of the 30S ribosomal subunit. Forms a loose heterodimer with protein S19. Forms two bridges to the 50S subunit in the 70S ribosome.

Located at the top of the head of the 30S subunit, it contacts several helices of the 16S rRNA. In the 70S ribosome it contacts the 23S rRNA (bridge B1a) and protein L5 of the 50S subunit (bridge B1b), connecting the 2 subunits; these bridges are implicated in subunit movement. Contacts the tRNAs in the A and P-sites. The sequence is that of Small ribosomal subunit protein uS13 from Rickettsia africae (strain ESF-5).